We begin with the raw amino-acid sequence, 493 residues long: Ketol-acid reductoisomerase (NADP(+)) (493 aa).

Residues 15 to 208 (AQLGKCRFMQ…GGDRAGVLES (194 aa)) form the KARI N-terminal Rossmann domain. Residues 45–48 (CGAQ), Arg-68, Arg-76, Ser-78, and 108–110 (DKQ) contribute to the NADP(+) site. The active site involves His-132. NADP(+) is bound at residue Gly-158. KARI C-terminal knotted domains follow at residues 209 to 344 (SFVA…NAPA) and 345 to 486 (FAGK…MKDM). Residues Asp-217, Glu-221, Glu-389, and Glu-393 each contribute to the Mg(2+) site. Ser-414 lines the substrate pocket.

The protein belongs to the ketol-acid reductoisomerase family. Mg(2+) serves as cofactor.

The catalysed reaction is (2R)-2,3-dihydroxy-3-methylbutanoate + NADP(+) = (2S)-2-acetolactate + NADPH + H(+). The enzyme catalyses (2R,3R)-2,3-dihydroxy-3-methylpentanoate + NADP(+) = (S)-2-ethyl-2-hydroxy-3-oxobutanoate + NADPH + H(+). It participates in amino-acid biosynthesis; L-isoleucine biosynthesis; L-isoleucine from 2-oxobutanoate: step 2/4. The protein operates within amino-acid biosynthesis; L-valine biosynthesis; L-valine from pyruvate: step 2/4. Involved in the biosynthesis of branched-chain amino acids (BCAA). Catalyzes an alkyl-migration followed by a ketol-acid reduction of (S)-2-acetolactate (S2AL) to yield (R)-2,3-dihydroxy-isovalerate. In the isomerase reaction, S2AL is rearranged via a Mg-dependent methyl migration to produce 3-hydroxy-3-methyl-2-ketobutyrate (HMKB). In the reductase reaction, this 2-ketoacid undergoes a metal-dependent reduction by NADPH to yield (R)-2,3-dihydroxy-isovalerate. The polypeptide is Ketol-acid reductoisomerase (NADP(+)) (Aeromonas hydrophila subsp. hydrophila (strain ATCC 7966 / DSM 30187 / BCRC 13018 / CCUG 14551 / JCM 1027 / KCTC 2358 / NCIMB 9240 / NCTC 8049)).